The primary structure comprises 620 residues: Probable potassium transport system protein Kup (620 aa).

12 helical membrane-spanning segments follow: residues 11–31 (LAFL…LYAF), 51–71 (ILSL…LLLV), 100–120 (IAML…VITP), 138–158 (LAPY…AVQA), 167–187 (FFAP…AHAI), 202–222 (AVHF…LVVL), 246–266 (WFAL…AYLL), 288–308 (LILL…SGIF), 334–354 (GQIY…FVML), 364–384 (AAYG…LVLV), 396–416 (VVTI…STST), and 418–438 (LMEG…VMYI).

Belongs to the HAK/KUP transporter (TC 2.A.72) family.

It is found in the cell inner membrane. It catalyses the reaction K(+)(in) + H(+)(in) = K(+)(out) + H(+)(out). In terms of biological role, transport of potassium into the cell. Likely operates as a K(+):H(+) symporter. This Vibrio cholerae serotype O1 (strain ATCC 39315 / El Tor Inaba N16961) protein is Probable potassium transport system protein Kup.